The following is a 1115-amino-acid chain: PAN2-PAN3 deadenylation complex catalytic subunit PAN2 (1115 aa).

WD repeat units lie at residues 27 to 66 (NRDK…YTRY), 112 to 153 (AAFS…GCLD), 155 to 194 (LLNY…TIKS), 197 to 236 (AHSA…YDLR), and 295 to 334 (HPCQ…MGMF). The interval 337–473 (TPEMLAYPDY…IQTYTSINKY (137 aa)) is linker. The 382-residue stretch at 474-855 (EVPPAYSRLP…TPEIIIYCDA (382 aa)) folds into the USP domain. Residues cysteine 660, histidine 662, cysteine 713, and cysteine 716 each contribute to the Zn(2+) site. The Exonuclease domain occupies 907 to 1079 (VAIDAEFVSL…EDAHTALILY (173 aa)). Residues aspartate 910, glutamate 912, aspartate 1020, and aspartate 1071 each contribute to the a divalent metal cation site.

It belongs to the peptidase C19 family. PAN2 subfamily. Forms a heterotrimer with an asymmetric homodimer of the regulatory subunit PAN3 to form the poly(A)-nuclease (PAN) deadenylation complex. It depends on a divalent metal cation as a cofactor.

It is found in the cytoplasm. It catalyses the reaction Exonucleolytic cleavage of poly(A) to 5'-AMP.. Positively regulated by the regulatory subunit PAN3. Negatively regulated by PAB1-binding protein PBP1. Inhibited under stress conditions. Inhibition of deadenylation under stress increases mRNA stability, which may be a mechanism to retain the majority of the cytoplasmic pool of mRNAs for later reuse and recovery from stress. Functionally, catalytic subunit of the poly(A)-nuclease (PAN) deadenylation complex, one of two cytoplasmic mRNA deadenylases involved in mRNA turnover. PAN specifically shortens poly(A) tails of RNA and the activity is stimulated by poly(A)-binding protein PAB1. PAN deadenylation is followed by rapid degradation of the shortened mRNA tails by the CCR4-NOT complex. Deadenylated mRNAs are then degraded by two alternative mechanisms, namely exosome-mediated 3'-5' exonucleolytic degradation, or deadenylation-dependent mRNA decaping by DCP1-DCP2 and subsequent 5'-3' exonucleolytic degradation by XRN1. May also be involved in post-transcriptional maturation of mRNA poly(A) tails, trimming the tails from their synthesized length to the slightly shorter, apparently messenger-specific length found on newly exported mRNAs. PAN cooperates with protein kinase DUN1 in the regulation of RAD5 mRNA levels and cell survival in response to replicational stress. This Saccharomyces cerevisiae (strain ATCC 204508 / S288c) (Baker's yeast) protein is PAN2-PAN3 deadenylation complex catalytic subunit PAN2.